The primary structure comprises 219 residues: LHFPL tetraspan subfamily member 5 protein (219 aa).

The Cytoplasmic portion of the chain corresponds to 1 to 24; that stretch reads MVKLLPAQEAAKIYHTNYVRNSRA. Residues 25–45 traverse the membrane as a helical segment; that stretch reads VGVMWGTLTICFSVLVMALFI. Over 46-98 the chain is Extracellular; that stretch reads QPYWIGDSVSTPQAGYFGLFSYCVGNVLSSELICKGGPLDFSSIPSRAFKTAM. Residues 99-119 traverse the membrane as a helical segment; the sequence is FFVALAMFLIIGSIICFSLFF. The Cytoplasmic segment spans residues 120–128; sequence VCNTATVYK. Residues 129–149 traverse the membrane as a helical segment; that stretch reads ICAWMQLAAATGLMIGCLVYP. The Extracellular portion of the chain corresponds to 150–178; it reads DGWDSSEVRRMCGEQTGKYTLGHCTIRWA. A helical membrane pass occupies residues 179–199; that stretch reads FMLAILSIGDALILSFLAFVL. Residues 200 to 219 lie on the Cytoplasmic side of the membrane; that stretch reads GYRQDKLLPDDYKADGNEEV.

The protein belongs to the LHFP family. As to quaternary structure, forms the MET channel composed of TMC (TMC1 or TMC2), TMIE, TOMT, CIB (CIB2 or CIB3), LHPL5 and PCDH15. Interaction with PCDH15 is required for efficient localization to hair bundles.

The protein localises to the cell membrane. In terms of biological role, auxiliary subunit of the mechanotransducer (MET) non-specific cation channel complex located at the tips of the shorter stereocilia of cochlear hair cells and that mediates sensory transduction in the auditory system. The MET complex is composed of two dimeric pore-forming ion-conducting transmembrane TMC (TMC1 or TMC2) subunits, and aided by several auxiliary proteins including LHFPL5, TMIE, CIB2/3 and TOMT, and the tip-link PCDH15. Functionally couples PCDH15 to the transduction channel. In Rattus norvegicus (Rat), this protein is LHFPL tetraspan subfamily member 5 protein.